Here is a 272-residue protein sequence, read N- to C-terminus: Putative phosphoenolpyruvate synthase regulatory protein (272 aa).

Residue Gly-152 to Thr-159 participates in ADP binding.

This sequence belongs to the pyruvate, phosphate/water dikinase regulatory protein family. PSRP subfamily.

It catalyses the reaction [pyruvate, water dikinase] + ADP = [pyruvate, water dikinase]-phosphate + AMP + H(+). The catalysed reaction is [pyruvate, water dikinase]-phosphate + phosphate + H(+) = [pyruvate, water dikinase] + diphosphate. Bifunctional serine/threonine kinase and phosphorylase involved in the regulation of the phosphoenolpyruvate synthase (PEPS) by catalyzing its phosphorylation/dephosphorylation. The protein is Putative phosphoenolpyruvate synthase regulatory protein of Pseudomonas putida (strain GB-1).